Consider the following 372-residue polypeptide: UDP-N-acetylglucosamine 2-epimerase (372 aa).

Substrate contacts are provided by residues Arg-10, Lys-15, Asp-95, Glu-117, His-212, Gln-270, Phe-275, 289 to 291 (SGG), Glu-295, and Arg-312.

This sequence belongs to the UDP-N-acetylglucosamine 2-epimerase family.

It carries out the reaction UDP-N-acetyl-alpha-D-glucosamine = UDP-N-acetyl-alpha-D-mannosamine. Its pathway is capsule biogenesis; capsule polysaccharide biosynthesis. Its activity is regulated as follows. Activated by UDP-GlcNAc and inhibited by 2-acetamidoglucal and UDP. Activity is strongly decreased in the presence of Co(2+) and abolished in the presence of Mn(2+) or Zn(2+). Catalyzes the interconversion between UDP-N-acetylglucosamine (UDP-GlcNAc) and UDP-N-acetylmannosamine (UDP-ManNAc). Involved in the biosynthesis of the capsular polysaccharides. In vitro, can also use several chemoenzymatically synthesized UDP-ManNAc derivatives as substrates, with lower efficiency. The protein is UDP-N-acetylglucosamine 2-epimerase of Neisseria meningitidis serogroup A / serotype 4A (strain DSM 15465 / Z2491).